Consider the following 405-residue polypeptide: MDHLPMPKFGPLAGLRVVFSGIEIAGPFAGQMFAEWGAEVIWIENVAWADTIRVQPNYPQLSRRNLHALSLNIFKDEGREAFLKLMETTDIFIEASKGPAFARRGITDEVLWQHNPKLVIAHLSGFGQYGTEEYTNLPAYNTIAQAFSGYLIQNGDVDQPMPAFPYTADYFSGLTATTAALAALHKVRETGKGESIDIAMYEVMLRMGQYFMMDYFNGGEMCPRMTKGKDPYYAGCGLYKCADGYIVMELVGITQIAECFKDIGLAHLLGTPEIPEGTQLIHRIECPYGPLVEEKLDAWLAAHTIAEVKERFAELNIACAKVLTVPELESNPQYVARESITQWQTMDGRTCKGPNIMPKFKNNPGQIWRGMPSHGMDTAAILKNIGYSENDIQELVSKGLAKVED.

Lysine 97 and arginine 104 together coordinate CoA. Residue aspartate 169 is the Nucleophile of the active site.

The protein belongs to the CoA-transferase III family. CaiB subfamily. As to quaternary structure, homodimer.

It localises to the cytoplasm. The enzyme catalyses crotonobetainyl-CoA + (R)-carnitine = crotonobetaine + (R)-carnitinyl-CoA. It catalyses the reaction 4-(trimethylamino)butanoyl-CoA + (R)-carnitine = (R)-carnitinyl-CoA + 4-(trimethylamino)butanoate. The protein operates within amine and polyamine metabolism; carnitine metabolism. Functionally, catalyzes the reversible transfer of the CoA moiety from gamma-butyrobetainyl-CoA to L-carnitine to generate L-carnitinyl-CoA and gamma-butyrobetaine. Is also able to catalyze the reversible transfer of the CoA moiety from gamma-butyrobetainyl-CoA or L-carnitinyl-CoA to crotonobetaine to generate crotonobetainyl-CoA. The sequence is that of L-carnitine CoA-transferase from Escherichia coli O7:K1 (strain IAI39 / ExPEC).